The primary structure comprises 431 residues: MVRSDSAEEDQIIIDDGFDLTEEDEEMMSSGTGALPVTIADWNSVTNARMAPPSIMSAASAFDLTASGMQNSLRSVLPTSTIGHAPMLANRSLSQPAPLSPTSLDPDRRSRMRRQIANCNERRRMQSINAGFLALRALLPRKEGEKLSKAAILQQTADMVHQLLGHKGEDIPDGGEPKKLKLEEDHHDADHQAQIAHLQTILETERAARKALESQVIQLRELLQMTTTSSQASSPVTPRSNGSGGFTLPSSYASSALPTPLRESPERKPSFQDTTSTPLSLLTLNGSPTSSESLASQRIFHPPPTLPSLETTVIRPTPLPPISVEISSPSLSTPSPLTAAPIIFSTAVPTQSSILFQTAAAAVTSAMSTGNSTPVALPHHLQGHNSAFVSTQPSLTLSQSMQTIVEAIRHLEGSHFIPTSPPPTSQTSLVR.

Positions 88–109 (LANRSLSQPAPLSPTSLDPDRR) are disordered. The span at 91–103 (RSLSQPAPLSPTS) shows a compositional bias: polar residues. The 52-residue stretch at 112-163 (MRRQIANCNERRRMQSINAGFLALRALLPRKEGEKLSKAAILQQTADMVHQL) folds into the bHLH domain. 2 stretches are compositionally biased toward polar residues: residues 226–241 (TTTS…PRSN) and 248–257 (LPSSYASSAL). Positions 226 to 311 (TTTSSQASSP…PPPTLPSLET (86 aa)) are disordered. Residues 274 to 291 (TTSTPLSLLTLNGSPTSS) are compositionally biased toward low complexity.

As to expression, expressed in the pharynx, nerve cords, the H-shaped excretory cell, vulva muscles, and the anal depressor (at protein level). Expressed in the intestine (at protein level). In males, it is also expressed in the spicules and hyp7 cells of the hypodermis (at protein level).

The protein localises to the nucleus. In terms of biological role, transcriptional regulator. Component of a feedback loop involving atfs-1, atgl-1 and hlh-11. Binds to the promoter of the atgl-1 lipase to negatively regulate the expression of atgl-1, and thereby promoting fat oxidation in response to mitochondrial stress and mitochondrial respiration in the intestine. In addition, functions with atfs-1 to maintain lifespan. May have a role in fertility and in positively regulating body size. This is Helix-loop-helix protein 11 from Caenorhabditis elegans.